We begin with the raw amino-acid sequence, 1450 residues long: MEAGYAEIAAVQFNIAGDNDHKRQGVMEVTISNLFEGTLPAEGGIYDARMGTTDHHYKCITCSHQRKQCMGHPGILQMHAPVLQPLFIAEIRRWLRVICLNCGAPIVDLKRYEHLIRPKRLIEAASSQTEGKQCYVCKAVHPKIVKDSEDYFTFWVDQQGKIDKLYPQIIREIFSRVTYDTVVKLGRSKNSHPEKLVLKAIQIPPISIRPGIRLGIGSGPQSFHDINNVIQYLVRKNLLIPKDLQIVRGQKIPLNIDRNLQTIQQLYYNFLLDSVSTTATQGGTGKRGIVMGARPAPSIMRRLPRKEGRIRKSLLGSQVWSISRSTICGNSDLHLDEVGYPISFARTLQVAETVQHYNINRLMPYFLNGKRQYPGCSRVYKQITQSVHDIEGLKQDFRLEVGDILYRDVVTGDVAFFNRQPSLERSSIGVHRIVVLENPKISTFQMNVSACAWYNADFDGDQMNLWVPWSVMSRVEAELLCSVRNWFISTKSSGPVNGQVQDSTVGSFLLTRTNTPMGKNVMNKLHAMGLFQTTQTDPPCFANYSPTDLLDGKSVVSMLLKQTPINYQRAPTWYSEVYAPYMHYNKQDISTQIRNGELIEGVLDKKAVGAGSSGGIYHLISRRYGPQQALKMIFATQQLALNYVRNAGFTVSTADMLLTPEAHQEVQEIINKLLLESEEINNRLLHGDIMPPIGLTTHDFYEKLQLNALKFPDRILKPIMNSINPETNGLFQMVATGAKGSNPNMIHIMAGIGQIEINTQRIQPQFSFGRTLVYYPRFALEAQAYGFICNSYIAGLTSPEFIFGEMNGRFDLINKALSTSSTGYANRKAIFGLQSCIVDYYRRVSIDTRLVQQLYGEDGLDARQLETVRFETIMLSDQELEDKFKYTGIQSPLFEEEFSRLKKDRDKYRQIFLNVENFNFSQLLTDVRQVPVNVASIVKNILLSSTSGVLPFDEKSILQKYAMVKTFCKNLPYVFINNIQERLQTPIPVYLKRAAALMRMLIRIELATVKTLNITCEQMSAILDLIRLQYTQSLINYGEAVGILAAQSVSEPLTQYMLDSHHRSVAGGTNKSGIVRPQEIFSAKPVEAEQSSEMLLRLKNPEVETNKTYAQEIANSIELITFERLILQWHLLYETYSSTKKNVMYPDFASDVEWMTDFLENHPLLQPPEDIANWCIRLELNKTTMILKSISLESIINSLRAKHPNTYIMHSVENTASGIPIIIRIYLRESAFRRSTNTRMATDEKIAVNVVDKLLNSTIRGIPGIKNANVVKLMRHRVDAQGKLVRLDNIYAIKTNGTNIFGAMLDDNIDPYTIVSSSIGDTMELYGIEAARQKIISEIRTVMGDKGPNHRHLLMYADLMTRTGQVTSLEKAGLNAREPSNVLLRMALSSPVQVLTDAAVDSAVNPIYGIAAPTLMGSVPRIGTMYSDIIMDEKYITENYKSVDSMIDML.

The protein belongs to the RNA polymerase beta' chain family. Part of the viral DNA-directed RNA polymerase that consists of 8 polII-like subunits (RPB1, RPB2, RPB3, RPB5, RPB6, RPB7, RPB9, RPB10), a capping enzyme and a termination factor.

Its subcellular location is the virion. It carries out the reaction RNA(n) + a ribonucleoside 5'-triphosphate = RNA(n+1) + diphosphate. Functionally, catalytic component of the DNA-directed RNA polymerase (RNAP) that catalyzes the transcription in the cytoplasm of viral DNA into RNA using the four ribonucleoside triphosphates as substrates. Forms the polymerase active center together with RPB2. Part of the core element with the central large cleft, the clamp element that moves to open and close the cleft and the jaws that are thought to grab the incoming DNA template. The protein is DNA-directed RNA polymerase RPB1 homolog of African swine fever virus (strain Badajoz 1971 Vero-adapted) (Ba71V).